The sequence spans 607 residues: MSKSLLWDDLEYPIQPWIRSAVDVMGFENMTPVQAATIPLFARNKDVVVDSVTGSGKTVSFVIPIFEKIVQEEANTTKMKKGHFHSLIVSPTKELAKQIHSVFESFLEHYPENLYPIRSQLLVGTNVKTVRDDVSDFMENKPQILIGTPGRILDFLKIPSVKTSMCSMVILDEADRLLDVSFLKDMENIMNILPKQRRTGLFSATITSAGDNIFKTGLRNPVKVTVNSKSQAPSSLKIDCAVVETDKKLEQVISIINNYKFKKCIAYFPTCHSVTYFYSFMQYLLKKGIIKEEIQIYSLHGKLQTSARIKTLETFTETISNAVLLTTDVAARGIDIPDVDLVLQLDPPTDPEVFLHRCGRTGRANKLGKAITFLTPGREEDYIPFMEVKNINLEEISLDIVNLPDNFYEIFKDWLLEDRARLDQAVKSYVAYIKTYSKHAASSIFRLQSFDYVGLAKFYGLIRLPKMPEITKYFKEDKENARTFGEGWLIDPPINMDKFGYLDKKKEDRRLADLKNLKSIHDKKKLKSELKKKNMSWSNNTQSKEEKVERRTKMALKRKRIEEELSKEADENSSGDDEQNRDWKQVILQNKKSKNSNNGMQGSFDDL.

The Q motif motif lies at 7 to 35 (WDDLEYPIQPWIRSAVDVMGFENMTPVQA). The region spanning 38-224 (IPLFARNKDV…KTGLRNPVKV (187 aa)) is the Helicase ATP-binding domain. 51 to 58 (SVTGSGKT) contributes to the ATP binding site. The short motif at 172–175 (DEAD) is the DEAD box element. Residues 248-404 (KLEQVISIIN…EISLDIVNLP (157 aa)) form the Helicase C-terminal domain. The tract at residues 527-607 (KSELKKKNMS…NGMQGSFDDL (81 aa)) is disordered. Residues 529–565 (ELKKKNMSWSNNTQSKEEKVERRTKMALKRKRIEEEL) adopt a coiled-coil conformation. 2 stretches are compositionally biased toward basic and acidic residues: residues 543 to 552 (SKEEKVERRT) and 560 to 570 (RIEEELSKEAD). The segment covering 587–601 (ILQNKKSKNSNNGMQ) has biased composition (polar residues).

The protein belongs to the DEAD box helicase family. DDX55/SPB4 subfamily. As to quaternary structure, component of pre-60S ribosomal complexes.

It is found in the nucleus. The protein localises to the nucleolus. It catalyses the reaction ATP + H2O = ADP + phosphate + H(+). ATP-binding RNA helicase involved in the biogenesis of 60S ribosomal subunits. Binds 90S pre-ribosomal particles and dissociates from pre-60S ribosomal particles after processing of 27SB pre-rRNA. Required for the normal formation of 18S rRNA through the processing of pre-rRNAs at sites A0, A1 and A2, and the normal formation of 25S and 5.8S rRNAs through the processing of pre-rRNAs at sites C1 and C2. The protein is ATP-dependent rRNA helicase SPB4 of Vanderwaltozyma polyspora (strain ATCC 22028 / DSM 70294 / BCRC 21397 / CBS 2163 / NBRC 10782 / NRRL Y-8283 / UCD 57-17) (Kluyveromyces polysporus).